Reading from the N-terminus, the 376-residue chain is Beta sliding clamp (376 aa).

It belongs to the beta sliding clamp family. As to quaternary structure, forms a ring-shaped head-to-tail homodimer around DNA which binds and tethers DNA polymerases and other proteins to the DNA. The DNA replisome complex has a single clamp-loading complex (3 tau and 1 each of delta, delta', psi and chi subunits) which binds 3 Pol III cores (1 core on the leading strand and 2 on the lagging strand) each with a beta sliding clamp dimer. Additional proteins in the replisome are other copies of gamma, psi and chi, Ssb, DNA helicase and RNA primase.

It localises to the cytoplasm. Its function is as follows. Confers DNA tethering and processivity to DNA polymerases and other proteins. Acts as a clamp, forming a ring around DNA (a reaction catalyzed by the clamp-loading complex) which diffuses in an ATP-independent manner freely and bidirectionally along dsDNA. Initially characterized for its ability to contact the catalytic subunit of DNA polymerase III (Pol III), a complex, multichain enzyme responsible for most of the replicative synthesis in bacteria; Pol III exhibits 3'-5' exonuclease proofreading activity. The beta chain is required for initiation of replication as well as for processivity of DNA replication. The chain is Beta sliding clamp (dnaN) from Streptomyces coelicolor (strain ATCC BAA-471 / A3(2) / M145).